We begin with the raw amino-acid sequence, 66 residues long: Large ribosomal subunit protein bL33c (66 aa).

The protein belongs to the bacterial ribosomal protein bL33 family.

Its subcellular location is the plastid. It is found in the chloroplast. In Illicium oligandrum (Star anise), this protein is Large ribosomal subunit protein bL33c.